The following is a 451-amino-acid chain: uncharacterized protein (451 aa).

Residues 1–59 (MLHKNDIIETEISDISHEGMGIAKVDGFVFFVENALPGEIIKMRVLKLRKRIGYGKVEE) enclose the TRAM domain. Residues Gln-283, Tyr-312, Glu-333, and Asp-381 each coordinate S-adenosyl-L-methionine. The active-site Nucleophile is Cys-408.

Belongs to the class I-like SAM-binding methyltransferase superfamily. RNA M5U methyltransferase family.

This is an uncharacterized protein from Streptococcus agalactiae serotype V (strain ATCC BAA-611 / 2603 V/R).